Here is a 184-residue protein sequence, read N- to C-terminus: Photosystem I assembly protein Ycf4 (184 aa).

2 consecutive transmembrane segments (helical) span residues 21–43 and 58–78; these read NFFWACILFLGSLGFFLVGISSY and LFVPQGIVMCFYGIAGLFISS.

It belongs to the Ycf4 family.

It is found in the plastid. It localises to the chloroplast thylakoid membrane. In terms of biological role, seems to be required for the assembly of the photosystem I complex. The protein is Photosystem I assembly protein Ycf4 of Pinus thunbergii (Japanese black pine).